A 175-amino-acid chain; its full sequence is MDIAIHHPWIRRPFFPFHSPSRLFDQFFGEHLLESDLFSTSTSLSPFYLRPPSFFRAPSWIDTGLSEMRMEKDRLSVNLDVKHFSPEELKVKVLGDVIEVHGKHEERQDEHGFISREFHRKYRIPADVDPLTITSSLSSDGVLTVNGPRKQASGPERTIPITREEKPAVTAAPKK.

Methionine 1 is modified (N-acetylmethionine). Phosphoserine is present on serine 19. Serine 41 carries O-linked (GlcNAc) serine glycosylation. Serine 45 and serine 59 each carry phosphoserine. The region spanning 56–164 (RAPSWIDTGL…PERTIPITRE (109 aa)) is the sHSP domain. Histidine 83 provides a ligand contact to Zn(2+). An N6-acetyllysine modification is found at lysine 92. Histidine 104, glutamate 106, histidine 111, and histidine 119 together coordinate Zn(2+). The segment at 142–175 (VLTVNGPRKQASGPERTIPITREEKPAVTAAPKK) is disordered. The residue at position 166 (lysine 166) is an N6-acetyllysine. Threonine 170 carries an O-linked (GlcNAc) threonine glycan.

This sequence belongs to the small heat shock protein (HSP20) family. Heteromer composed of three CRYAA and one CRYAB subunits. Aggregates with homologous proteins, including the small heat shock protein HSPB1, to form large heteromeric complexes. Inter-subunit bridging via zinc ions enhances stability, which is crucial as there is no protein turn over in the lens. Interacts with HSPBAP1 and TTN/titin. Interacts with TMEM109; in the cellular response to DNA damage. Interacts with DES; binds rapidly during early stages of DES filament assembly and a reduced binding seen in the later stages. Interacts with ATP6V1A and with MTOR, forming a ternary complex. In terms of tissue distribution, lens as well as other tissues.

It localises to the cytoplasm. The protein localises to the nucleus. It is found in the secreted. Its subcellular location is the lysosome. Its function is as follows. May contribute to the transparency and refractive index of the lens. Has chaperone-like activity, preventing aggregation of various proteins under a wide range of stress conditions. In lens epithelial cells, stabilizes the ATP6V1A protein, preventing its degradation by the proteasome. The polypeptide is Alpha-crystallin B chain (CRYAB) (Spalax judaei (Judean Mountains blind mole rat)).